The following is a 174-amino-acid chain: Gamma-crystallin E (174 aa).

2 Beta/gamma crystallin 'Greek key' domains span residues 2-40 (GKIT…RVDS) and 41-83 (GCWM…RLIP). Residues 84–87 (HSSS) are connecting peptide. Beta/gamma crystallin 'Greek key' domains lie at 88-128 (HRIR…HVME) and 129-171 (GYWV…RRIM).

This sequence belongs to the beta/gamma-crystallin family. Detected in the superior olivary complex and fibers of the ventral aoustic stria of the auditory hindbrain.

In terms of biological role, crystallins are the dominant structural components of the vertebrate eye lens. The protein is Gamma-crystallin E (Cryge) of Rattus norvegicus (Rat).